A 478-amino-acid chain; its full sequence is Proline--tRNA ligase (478 aa).

Belongs to the class-II aminoacyl-tRNA synthetase family. ProS type 3 subfamily. In terms of assembly, homodimer.

The protein localises to the cytoplasm. It catalyses the reaction tRNA(Pro) + L-proline + ATP = L-prolyl-tRNA(Pro) + AMP + diphosphate. In terms of biological role, catalyzes the attachment of proline to tRNA(Pro) in a two-step reaction: proline is first activated by ATP to form Pro-AMP and then transferred to the acceptor end of tRNA(Pro). This Clostridium botulinum (strain Langeland / NCTC 10281 / Type F) protein is Proline--tRNA ligase.